We begin with the raw amino-acid sequence, 122 residues long: Glycine cleavage system H protein (122 aa).

A Lipoyl-binding domain is found at 19–101 (TATIGITKHA…EGNSWLYKIK (83 aa)). Lysine 60 bears the N6-lipoyllysine mark.

It belongs to the GcvH family. In terms of assembly, the glycine cleavage system is composed of four proteins: P, T, L and H. (R)-lipoate serves as cofactor.

In terms of biological role, the glycine cleavage system catalyzes the degradation of glycine. The H protein shuttles the methylamine group of glycine from the P protein to the T protein. The sequence is that of Glycine cleavage system H protein from Dinoroseobacter shibae (strain DSM 16493 / NCIMB 14021 / DFL 12).